Consider the following 254-residue polypeptide: 3-deoxy-manno-octulosonate cytidylyltransferase (254 aa).

It belongs to the KdsB family.

Its subcellular location is the cytoplasm. It catalyses the reaction 3-deoxy-alpha-D-manno-oct-2-ulosonate + CTP = CMP-3-deoxy-beta-D-manno-octulosonate + diphosphate. It functions in the pathway nucleotide-sugar biosynthesis; CMP-3-deoxy-D-manno-octulosonate biosynthesis; CMP-3-deoxy-D-manno-octulosonate from 3-deoxy-D-manno-octulosonate and CTP: step 1/1. Its pathway is bacterial outer membrane biogenesis; lipopolysaccharide biosynthesis. Its function is as follows. Activates KDO (a required 8-carbon sugar) for incorporation into bacterial lipopolysaccharide in Gram-negative bacteria. This is 3-deoxy-manno-octulosonate cytidylyltransferase from Pseudomonas entomophila (strain L48).